The chain runs to 926 residues: Isoleucine--tRNA ligase (926 aa).

The tract at residues 1-21 (MKMKETLQLGKTAFPMRGNLP) is disordered. Residues 57 to 67 (PYANGNIHLGH) carry the 'HIGH' region motif. Glu-552 lines the L-isoleucyl-5'-AMP pocket. Residues 593-597 (KMSKS) carry the 'KMSKS' region motif. Residue Lys-596 coordinates ATP. Zn(2+) is bound by residues Cys-886, Cys-889, Cys-906, and Cys-909.

The protein belongs to the class-I aminoacyl-tRNA synthetase family. IleS type 1 subfamily. As to quaternary structure, monomer. Zn(2+) serves as cofactor.

Its subcellular location is the cytoplasm. It carries out the reaction tRNA(Ile) + L-isoleucine + ATP = L-isoleucyl-tRNA(Ile) + AMP + diphosphate. Functionally, catalyzes the attachment of isoleucine to tRNA(Ile). As IleRS can inadvertently accommodate and process structurally similar amino acids such as valine, to avoid such errors it has two additional distinct tRNA(Ile)-dependent editing activities. One activity is designated as 'pretransfer' editing and involves the hydrolysis of activated Val-AMP. The other activity is designated 'posttransfer' editing and involves deacylation of mischarged Val-tRNA(Ile). The protein is Isoleucine--tRNA ligase of Enterococcus faecalis (strain ATCC 700802 / V583).